Reading from the N-terminus, the 373-residue chain is tRNA-specific 2-thiouridylase MnmA (373 aa).

ATP-binding positions include 12–19 and M38; that span reads GMSGGVDS. Residues 98–100 are interaction with target base in tRNA; it reads NPD. C103 functions as the Nucleophile in the catalytic mechanism. An intrachain disulfide couples C103 to C200. G127 is an ATP binding site. The segment at 150-152 is interaction with tRNA; the sequence is KDQ. Catalysis depends on C200, which acts as the Cysteine persulfide intermediate. Positions 312–313 are interaction with tRNA; it reads RY.

Belongs to the MnmA/TRMU family.

It localises to the cytoplasm. The enzyme catalyses S-sulfanyl-L-cysteinyl-[protein] + uridine(34) in tRNA + AH2 + ATP = 2-thiouridine(34) in tRNA + L-cysteinyl-[protein] + A + AMP + diphosphate + H(+). Functionally, catalyzes the 2-thiolation of uridine at the wobble position (U34) of tRNA, leading to the formation of s(2)U34. The chain is tRNA-specific 2-thiouridylase MnmA from Streptococcus pyogenes serotype M28 (strain MGAS6180).